The sequence spans 154 residues: Terephthalate 1,2-dioxygenase, terminal oxygenase component subunit beta 1 (154 aa).

This sequence belongs to the bacterial ring-hydroxylating dioxygenase beta subunit family. As to quaternary structure, heterotetramer composed of 2 alpha (TphA2I and TphA2II) and 2 beta (TphA3I and TphA3II) subunits. Part of a multicomponent enzyme system composed of a reductase (TphA1I or TphA1II) and a two-subunit oxygenase component (TphA2I or TphA2II and TphA3I or TphA3II). Requires Fe cation as cofactor.

It carries out the reaction terephthalate + NADH + O2 + H(+) = (3S,4R)-3,4-dihydroxycyclohexa-1,5-diene-1,4-dicarboxylate + NAD(+). With respect to regulation, inhibited by EDTA. Component of the terephthalate 1,2-dioxygenase multicomponent enzyme system which catalyzes the dioxygenation of terephthalate (TER/TPA) to 1,2-dihydroxy-3,5-cyclohexadiene-1,4-dicarboxylic acid (DCD). It can also use 2,5-dicarboxypyridine (PDC) and 1,4-napthalenedicarboxylic acid (NDC) as substrates, and preferentially uses NADPH which is the physiological electron donor. The polypeptide is Terephthalate 1,2-dioxygenase, terminal oxygenase component subunit beta 1 (tphA3I) (Comamonas sp).